A 584-amino-acid chain; its full sequence is Tyrosine-protein kinase Dnt (584 aa).

The signal sequence occupies residues 1–40; the sequence is MESVNKCGKSASTRNCTVKMSRKMWVLSLLALAALQLHSG. The Extracellular portion of the chain corresponds to 41–208; the sequence is SEVAAHLNVF…LETVMLPPTG (168 aa). The region spanning 49–180 is the WIF domain; the sequence is VFLNPVEVMR…HLVFRRKKIC (132 aa). Residues N124, N163, N168, and N183 are each glycosylated (N-linked (GlcNAc...) asparagine). A helical membrane pass occupies residues 209–229; that stretch reads LITLVVGVSVAMGSVCLLLMI. Topologically, residues 230-584 are cytoplasmic; it reads AYCVKGAANK…EFYSQITRYV (355 aa). The disordered stretch occupies residues 241-261; the sequence is QHHQHGGQPMRTSSFQRLNTH. The segment covering 250–261 has biased composition (polar residues); the sequence is MRTSSFQRLNTH. The region spanning 317-577 is the Protein kinase domain; that stretch reads VRLSSLLQEG…QLQSCLSEFY (261 aa). Residues 323–331 and K345 contribute to the ATP site; that span reads LQEGTFGRV. D442 (proton acceptor) is an active-site residue. Position 472 is a phosphotyrosine; by autocatalysis (Y472).

This sequence belongs to the protein kinase superfamily. Tyr protein kinase family. As to expression, expressed in dynamic domains in the embryonic epidermis, many of which border on sites of epithelial invagination into the embryo interior, including ventral furrow, cephalic furrow, fore- and hindgut, optic lobe and tracheal pits. Later in embryogenesis, expression is seen in imaginal tissues.

It localises to the cell membrane. It carries out the reaction L-tyrosyl-[protein] + ATP = O-phospho-L-tyrosyl-[protein] + ADP + H(+). Its function is as follows. May play an essential role in neuronal pathway recognition and ventral muscle attachment site selection. The sequence is that of Tyrosine-protein kinase Dnt (dnt) from Drosophila melanogaster (Fruit fly).